Consider the following 577-residue polypeptide: Autophagy-related protein 20 (577 aa).

The disordered stretch occupies residues 57-81 (GQSYVAPHSGGGRTSSGSSSSASLQ). A PX domain is found at 95–239 (GEQGRVRILE…DFLDPNNANW (145 aa)). Residues Arg-131, Ser-133, Lys-157, and Arg-205 each contribute to the a 1,2-diacyl-sn-glycero-3-phospho-(1D-myo-inositol-3-phosphate) site.

This sequence belongs to the sorting nexin family.

The protein resides in the endosome membrane. The protein localises to the preautophagosomal structure membrane. Required for cytoplasm to vacuole transport (Cvt), pexophagy and mitophagy. Also involved in endoplasmic reticulum-specific autophagic process and is essential for the survival of cells subjected to severe ER stress. Functions in protein retrieval from the endocytic pathway. The protein is Autophagy-related protein 20 (ATG20) of Eremothecium gossypii (strain ATCC 10895 / CBS 109.51 / FGSC 9923 / NRRL Y-1056) (Yeast).